A 367-amino-acid chain; its full sequence is Protein-glutamate methylesterase/protein-glutamine glutaminase 2 (367 aa).

Positions 3–120 constitute a Response regulatory domain; that stretch reads SVVVVDDSAF…SLDIVRIEND (118 aa). Position 54 is a 4-aspartylphosphate (Asp54). A disordered region spans residues 132 to 174; the sequence is RMLRTPRPVRPAPTASAPAQTAQVASAAPATAPSRPAMPATRA. Over residues 143–174 the composition is skewed to low complexity; the sequence is APTASAPAQTAQVASAAPATAPSRPAMPATRA. One can recognise a CheB-type methylesterase domain in the interval 175-367; that stretch reads SRPVRDVVAI…AAAIMNGLYK (193 aa). Residues Ser187, His214, and Asp310 contribute to the active site.

It belongs to the CheB family. In terms of processing, phosphorylated by CheA. Phosphorylation of the N-terminal regulatory domain activates the methylesterase activity.

The protein localises to the cytoplasm. It catalyses the reaction [protein]-L-glutamate 5-O-methyl ester + H2O = L-glutamyl-[protein] + methanol + H(+). The enzyme catalyses L-glutaminyl-[protein] + H2O = L-glutamyl-[protein] + NH4(+). Functionally, involved in chemotaxis. Part of a chemotaxis signal transduction system that modulates chemotaxis in response to various stimuli. Catalyzes the demethylation of specific methylglutamate residues introduced into the chemoreceptors (methyl-accepting chemotaxis proteins or MCP) by CheR. Also mediates the irreversible deamidation of specific glutamine residues to glutamic acid. This Nitratidesulfovibrio vulgaris (strain ATCC 29579 / DSM 644 / CCUG 34227 / NCIMB 8303 / VKM B-1760 / Hildenborough) (Desulfovibrio vulgaris) protein is Protein-glutamate methylesterase/protein-glutamine glutaminase 2.